The following is a 284-amino-acid chain: Pantothenate synthetase (284 aa).

30-37 (MGNLHDGH) provides a ligand contact to ATP. Catalysis depends on His-37, which acts as the Proton donor. Gln-61 serves as a coordination point for (R)-pantoate. Position 61 (Gln-61) interacts with beta-alanine. An ATP-binding site is contributed by 149–152 (GEKD). Gln-155 serves as a coordination point for (R)-pantoate. Residues Val-178 and 186-189 (LSSR) each bind ATP.

It belongs to the pantothenate synthetase family. In terms of assembly, homodimer.

It is found in the cytoplasm. It carries out the reaction (R)-pantoate + beta-alanine + ATP = (R)-pantothenate + AMP + diphosphate + H(+). The protein operates within cofactor biosynthesis; (R)-pantothenate biosynthesis; (R)-pantothenate from (R)-pantoate and beta-alanine: step 1/1. Functionally, catalyzes the condensation of pantoate with beta-alanine in an ATP-dependent reaction via a pantoyl-adenylate intermediate. The chain is Pantothenate synthetase from Klebsiella pneumoniae (strain 342).